Reading from the N-terminus, the 671-residue chain is Anti-sigma-I factor RsgI2 (671 aa).

At 1-57 (MSHYTGIILKLESDRAIVLTDGLDFMELKLKPGMQRGQHVIFDESDLYSAGLITRYK) the chain is on the cytoplasmic side. One can recognise a RsgI N-terminal anti-sigma domain in the interval 4-51 (YTGIILKLESDRAIVLTDGLDFMELKLKPGMQRGQHVIFDESDLYSAG). Residues 58-78 (SIIMPFSAFAAAAAVFLVILF) traverse the membrane as a helical segment. Over 79-671 (SLRFVSISQE…SGTLYWGIEP (593 aa)) the chain is Extracellular. Disordered stretches follow at residues 290–323 (TEAQPVDIPKSSPTPASFTAHVPTPPKTPSIPHT) and 359–505 (PVPV…APTE). Residues 359-379 (PVPVSTPKPVSTPAYSSTPTP) show a composition bias toward low complexity. Pro residues predominate over residues 380-400 (ESTPVPVSTPKPASTPTPAST). Positions 401 to 425 (PKPVSTPTHVSTPKPISTPTSTPRP) are enriched in low complexity. A compositionally biased stretch (pro residues) spans 426–446 (ASTPKPTSTPTPESTPKPTST). Over residues 447–491 (PAPVSTPTSTPIPTYTSTPASTPIPAYTSTPTSIPTLTPATSPAP) the composition is skewed to low complexity. Pro residues predominate over residues 492–502 (TSSPTPIPSPA). Residues 508 to 671 (LLTKIELQAY…SGTLYWGIEP (164 aa)) enclose the CBM3 domain. Ca(2+)-binding residues include Thr554, Asp556, Asp637, Ser640, and Asp641.

In terms of assembly, interacts (via RsgI N-terminal anti-sigma domain) with SigI2.

It localises to the cell membrane. In terms of biological role, anti-sigma factor for SigI2. Negatively regulates SigI2 activity through direct interaction. Binding of the polysaccharide substrate to the extracellular C-terminal sensing domain of RsgI2 may induce a conformational change in its N-terminal cytoplasmic region, leading to the release and activation of SigI2. The chain is Anti-sigma-I factor RsgI2 from Acetivibrio thermocellus (strain ATCC 27405 / DSM 1237 / JCM 9322 / NBRC 103400 / NCIMB 10682 / NRRL B-4536 / VPI 7372) (Clostridium thermocellum).